The sequence spans 94 residues: ATP synthase F(0) complex subunit f, mitochondrial (94 aa).

A2 is subject to N-acetylalanine. S3 is modified (phosphoserine). An N6-acetyllysine modification is found at K22. The helical transmembrane segment at 68–85 threads the bilayer; it reads MVLACYVLFSYSFSYKHL.

This sequence belongs to the ATPase F chain family. Component of the ATP synthase complex composed at least of ATP5F1A/subunit alpha, ATP5F1B/subunit beta, ATP5MC1/subunit c (homooctomer), MT-ATP6/subunit a, MT-ATP8/subunit 8, ATP5ME/subunit e, ATP5MF/subunit f, ATP5MG/subunit g, ATP5MK/subunit k, ATP5MJ/subunit j, ATP5F1C/subunit gamma, ATP5F1D/subunit delta, ATP5F1E/subunit epsilon, ATP5PF/subunit F6, ATP5PB/subunit b, ATP5PD/subunit d, ATP5PO/subunit OSCP. ATP synthase complex consists of a soluble F(1) head domain (subunits alpha(3) and beta(3)) - the catalytic core - and a membrane F(0) domain - the membrane proton channel (subunits c, a, 8, e, f, g, k and j). These two domains are linked by a central stalk (subunits gamma, delta, and epsilon) rotating inside the F1 region and a stationary peripheral stalk (subunits F6, b, d, and OSCP).

It localises to the mitochondrion. It is found in the mitochondrion inner membrane. Its function is as follows. Subunit f, of the mitochondrial membrane ATP synthase complex (F(1)F(0) ATP synthase or Complex V) that produces ATP from ADP in the presence of a proton gradient across the membrane which is generated by electron transport complexes of the respiratory chain. ATP synthase complex consist of a soluble F(1) head domain - the catalytic core - and a membrane F(1) domain - the membrane proton channel. These two domains are linked by a central stalk rotating inside the F(1) region and a stationary peripheral stalk. During catalysis, ATP synthesis in the catalytic domain of F(1) is coupled via a rotary mechanism of the central stalk subunits to proton translocation. In vivo, can only synthesize ATP although its ATP hydrolase activity can be activated artificially in vitro. Part of the complex F(0) domain. The protein is ATP synthase F(0) complex subunit f, mitochondrial of Homo sapiens (Human).